The following is a 65-amino-acid chain: Photosystem II reaction center protein J (65 aa).

A helical membrane pass occupies residues 35 to 55 (LWLVATAGGTAVIFVLGIFFY).

The protein belongs to the PsbJ family. As to quaternary structure, PSII is composed of 1 copy each of membrane proteins PsbA, PsbB, PsbC, PsbD, PsbE, PsbF, PsbH, PsbI, PsbJ, PsbK, PsbL, PsbM, PsbT, PsbX, PsbY, Psb30/Ycf12, peripheral proteins PsbO, CyanoQ (PsbQ), PsbU, PsbV and a large number of cofactors. It forms dimeric complexes.

Its subcellular location is the cellular thylakoid membrane. One of the components of the core complex of photosystem II (PSII). PSII is a light-driven water:plastoquinone oxidoreductase that uses light energy to abstract electrons from H(2)O, generating O(2) and a proton gradient subsequently used for ATP formation. It consists of a core antenna complex that captures photons, and an electron transfer chain that converts photonic excitation into a charge separation. This chain is Photosystem II reaction center protein J, found in Prochlorococcus marinus (strain NATL1A).